A 138-amino-acid chain; its full sequence is MRALWIVAVLLVGVEGSLVEFETLIMKIAGRSGISYYSSYGCYCGAGGQGWPQDASDRCCFEHDCCYAKLTGCDPTTDVYTYRQEDGEIVCGGDDPCGTQICECDKAAAICFRDSMNTYDYKYLRFSPENCQGESQPC.

The N-terminal stretch at 1–40 (MRALWIVAVLLVGVEGSLVEFETLIMKIAGRSGISYYSSY) is a signal peptide. Cystine bridges form between C42–C131, C44–C60, C59–C111, C65–C138, C66–C104, C73–C97, and C91–C102. A propeptide spanning residues 81–83 (TYR) is cleaved from the precursor. Q84 bears the Pyrrolidone carboxylic acid mark. The propeptide occupies 120–126 (DYKYLRF).

This sequence belongs to the phospholipase A2 family. Group II subfamily. D49 sub-subfamily. Heterodimer of an acidic and a basic chain. The acidic subunit is non-toxic, without enzymatic activity and comprises 3 peptides that are cross-linked by 5 disulfide bridges. The basic subunit is toxic, has phospholipase A2 activity and is composed of a single chain. Ca(2+) is required as a cofactor. In terms of tissue distribution, expressed by the venom gland.

The protein resides in the secreted. Snake venom phospholipase A2 (PLA2) that inhibits neuromuscular transmission by blocking acetylcholine release from the nerve termini. The chain is Phospholipase A2 homolog mojave toxin acidic chain from Crotalus scutulatus scutulatus (Mojave rattlesnake).